Here is a 453-residue protein sequence, read N- to C-terminus: Putative amino acid/polyamine transporter MPH_07630_2 (453 aa).

3 helical membrane passes run 2–21 (IGFS…VLVV), 30–50 (VMIW…YSMA), and 81–101 (VCGW…NFIA). The N-linked (GlcNAc...) asparagine glycan is linked to Asn110. 2 consecutive transmembrane segments (helical) span residues 121 to 141 (WHAV…SIFL) and 151 to 171 (AILI…LATN). Asn186 is a glycosylation site (N-linked (GlcNAc...) asparagine). 2 consecutive transmembrane segments (helical) span residues 193 to 213 (AYAA…YDAP) and 231 to 251 (IVMS…SLCF). N-linked (GlcNAc...) asparagine glycosylation occurs at Asn274. 4 consecutive transmembrane segments (helical) span residues 277–297 (GSVA…LVCA), 330–350 (LGVP…FNSI), 358–378 (FNTV…IPLL), and 403–423 (GLLA…TFNF). A glycan (N-linked (GlcNAc...) asparagine) is linked at Asn435.

The protein belongs to the amino acid-polyamine-organocation (APC) superfamily.

The protein localises to the membrane. In Macrophomina phaseolina (strain MS6) (Charcoal rot fungus), this protein is Putative amino acid/polyamine transporter MPH_07630_2.